Reading from the N-terminus, the 70-residue chain is Small ribosomal subunit protein bS21 (70 aa).

This sequence belongs to the bacterial ribosomal protein bS21 family.

In Nautilia profundicola (strain ATCC BAA-1463 / DSM 18972 / AmH), this protein is Small ribosomal subunit protein bS21.